The chain runs to 35 residues: Photosystem II reaction center protein T (35 aa).

The chain crosses the membrane as a helical span at residues 3–23 (ALVYTFLLVGTLGIIFFAIFF).

The protein belongs to the PsbT family. PSII is composed of 1 copy each of membrane proteins PsbA, PsbB, PsbC, PsbD, PsbE, PsbF, PsbH, PsbI, PsbJ, PsbK, PsbL, PsbM, PsbT, PsbY, PsbZ, Psb30/Ycf12, at least 3 peripheral proteins of the oxygen-evolving complex and a large number of cofactors. It forms dimeric complexes.

It localises to the plastid. The protein localises to the chloroplast thylakoid membrane. Found at the monomer-monomer interface of the photosystem II (PS II) dimer, plays a role in assembly and dimerization of PSII. PSII is a light-driven water plastoquinone oxidoreductase, using light energy to abstract electrons from H(2)O, generating a proton gradient subsequently used for ATP formation. The chain is Photosystem II reaction center protein T from Chaetosphaeridium globosum (Charophycean green alga).